A 289-amino-acid polypeptide reads, in one-letter code: MSFKDRLFICCQYLLPHHLLSRLVGFAADCRATWFKDRLIAWFARRYQVDMREAQVEDLQAYEHFNAFFTRALKDGARPPAQEPGAVLCPADGAISQLGPIEHGRIFQAKGHSYSLAELLGGDAELAAPFMGGDFATVYLSPRDYHRVHMPLAGTLREMVYVPGRLFSVNRTTAENVPELFARNERVVCLFDTERGPMAVVLVGAMIVASIETVWAGLVTPPKRELKTFRYDEAARAPIHLEKGAELGRFKLGSTAIVLFGPQQVAFAQGLGAATPVRMGECLALPKQA.

Active-site charge relay system; for autoendoproteolytic cleavage activity residues include aspartate 92, histidine 149, and serine 254. Serine 254 (schiff-base intermediate with substrate; via pyruvic acid; for decarboxylase activity) is an active-site residue. The residue at position 254 (serine 254) is a Pyruvic acid (Ser); by autocatalysis.

The protein belongs to the phosphatidylserine decarboxylase family. PSD-B subfamily. Prokaryotic type I sub-subfamily. In terms of assembly, heterodimer of a large membrane-associated beta subunit and a small pyruvoyl-containing alpha subunit. Pyruvate serves as cofactor. Is synthesized initially as an inactive proenzyme. Formation of the active enzyme involves a self-maturation process in which the active site pyruvoyl group is generated from an internal serine residue via an autocatalytic post-translational modification. Two non-identical subunits are generated from the proenzyme in this reaction, and the pyruvate is formed at the N-terminus of the alpha chain, which is derived from the carboxyl end of the proenzyme. The autoendoproteolytic cleavage occurs by a canonical serine protease mechanism, in which the side chain hydroxyl group of the serine supplies its oxygen atom to form the C-terminus of the beta chain, while the remainder of the serine residue undergoes an oxidative deamination to produce ammonia and the pyruvoyl prosthetic group on the alpha chain. During this reaction, the Ser that is part of the protease active site of the proenzyme becomes the pyruvoyl prosthetic group, which constitutes an essential element of the active site of the mature decarboxylase.

It localises to the cell membrane. It catalyses the reaction a 1,2-diacyl-sn-glycero-3-phospho-L-serine + H(+) = a 1,2-diacyl-sn-glycero-3-phosphoethanolamine + CO2. It functions in the pathway phospholipid metabolism; phosphatidylethanolamine biosynthesis; phosphatidylethanolamine from CDP-diacylglycerol: step 2/2. Catalyzes the formation of phosphatidylethanolamine (PtdEtn) from phosphatidylserine (PtdSer). In Pseudomonas paraeruginosa (strain DSM 24068 / PA7) (Pseudomonas aeruginosa (strain PA7)), this protein is Phosphatidylserine decarboxylase proenzyme.